A 139-amino-acid chain; its full sequence is Large ribosomal subunit protein uL16 (139 aa).

Basic residues predominate over residues 1-19 (MLIPRKVKHRKQHHPKRSG). The disordered stretch occupies residues 1–22 (MLIPRKVKHRKQHHPKRSGVAK).

This sequence belongs to the universal ribosomal protein uL16 family. In terms of assembly, part of the 50S ribosomal subunit.

Its function is as follows. Binds 23S rRNA and is also seen to make contacts with the A and possibly P site tRNAs. The protein is Large ribosomal subunit protein uL16 of Acidothermus cellulolyticus (strain ATCC 43068 / DSM 8971 / 11B).